The sequence spans 392 residues: 6-aminohexanoate-dimer hydrolase (392 aa).

Residues 1–27 (MNTPTTGSHPARYPSAAAGEPTLDSWQ) are disordered. Ser-112 is an active-site residue.

It catalyses the reaction [N-(6-aminohexanoyl)](n) + H2O = [N-(6-aminohexanoyl)](n-1) + 6-aminohexanoate. The catalysed reaction is N-(6-aminohexanoyl)-6-aminohexanoate + H2O = 2 6-aminohexanoate. Its pathway is xenobiotic degradation; nylon-6 oligomer degradation. Functionally, involved in nylon oligomer degradation. The sequence is that of 6-aminohexanoate-dimer hydrolase from Paenarthrobacter ureafaciens.